Here is a 477-residue protein sequence, read N- to C-terminus: MKVTLPDFRRAQVLVVGDVMLDRYWYGPTSRISPEAPVPVVKVETIEERPGGAANVAMNIASLGASARLVGLTGVDDAARALSTRLDEVHVECDFVAIPAQPTITKLRVLSRNQQLIRLDFEEGFGGVDPGPILARIRQALPQVGAVILSDYAKGALASVQAMICLARDAGVPVLIDPKGTDFERYRGATLLTPNLSEFEAVVGRCHSEQEIVDRGLALMERFDLTALLVTRSEQGMTLLQRGIAPLHMPTQAQEVYDVTGAGDTVIGMLAASIAAGASLDEACFLANAAAGVVVGKLGTSTVSPIELENAIRGRADTGFGVMTQEELKTAVLQARQRGEKVVMTNGVFDILHAGHVSYLANARRLGDRLIVAVNSDASTSRLKGPERPVNPLVQRMLVLAALEAVDWVIPFEEDTPQRIIAEILPDLLVKGGDYKPEEIAGGKEVIAAGGEVRVLNFEDGCSTSNIINIIRQGQND.

The interval methionine 1–threonine 318 is ribokinase. Position 195-198 (asparagine 195–glutamate 198) interacts with ATP. The active site involves aspartate 264. The segment at methionine 344–aspartate 477 is cytidylyltransferase.

The protein in the N-terminal section; belongs to the carbohydrate kinase PfkB family. This sequence in the C-terminal section; belongs to the cytidylyltransferase family. In terms of assembly, homodimer.

The catalysed reaction is D-glycero-beta-D-manno-heptose 7-phosphate + ATP = D-glycero-beta-D-manno-heptose 1,7-bisphosphate + ADP + H(+). The enzyme catalyses D-glycero-beta-D-manno-heptose 1-phosphate + ATP + H(+) = ADP-D-glycero-beta-D-manno-heptose + diphosphate. Its pathway is nucleotide-sugar biosynthesis; ADP-L-glycero-beta-D-manno-heptose biosynthesis; ADP-L-glycero-beta-D-manno-heptose from D-glycero-beta-D-manno-heptose 7-phosphate: step 1/4. It participates in nucleotide-sugar biosynthesis; ADP-L-glycero-beta-D-manno-heptose biosynthesis; ADP-L-glycero-beta-D-manno-heptose from D-glycero-beta-D-manno-heptose 7-phosphate: step 3/4. Functionally, catalyzes the phosphorylation of D-glycero-D-manno-heptose 7-phosphate at the C-1 position to selectively form D-glycero-beta-D-manno-heptose-1,7-bisphosphate. Catalyzes the ADP transfer from ATP to D-glycero-beta-D-manno-heptose 1-phosphate, yielding ADP-D-glycero-beta-D-manno-heptose. The polypeptide is Bifunctional protein HldE (Edwardsiella ictaluri (strain 93-146)).